The following is a 265-amino-acid chain: Neuronal membrane glycoprotein M6-b (265 aa).

Residues 31-51 (GGVPYASLVATILCFSGVALF) traverse the membrane as a helical segment. Residue asparagine 73 is glycosylated (N-linked (GlcNAc...) asparagine). A run of 2 helical transmembrane segments spans residues 90-110 (VIYG…AEGF) and 136-156 (FVFL…FSAV). A glycan (N-linked (GlcNAc...) asparagine) is linked at asparagine 177. Residues 224-244 (LFIVACAGAGATVIALLIYMM) form a helical membrane-spanning segment. Residue serine 257 is modified to Phosphoserine.

The protein belongs to the myelin proteolipid protein family. As to quaternary structure, interacts with SERT. In terms of tissue distribution, neurons and glia; cerebellar Bergmann glia, in glia within white matter tracts of the cerebellum and cerebrum, and in embryonic dorsal root ganglia.

The protein localises to the cell membrane. Its function is as follows. May be involved in neural development. Involved in regulation of osteoblast function and bone formation. Involved in matrix vesicle release by osteoblasts; this function seems to involve maintenance of the actin cytoskeleton. May be involved in cellular trafficking of SERT and thereby in regulation of serotonin uptake. The protein is Neuronal membrane glycoprotein M6-b (GPM6B) of Homo sapiens (Human).